The following is a 508-amino-acid chain: MKFVLLLSLIGFCWAQYDPHTADGRTAIVHLFEWRWADIAKECERYLAPKGFGGVQVSPPNENIIINNPSRPWWERYQPISYKICSRSGNENEFKDMVTRCNNVGVRIYVDAVINHMCGSGNSAGTHSTCGSYFNPNNREFSAVPYSAWYFNDNKCNGEINNYNDANQVRNCRLSGLLDLALDKDYVRTKVADYMNNLIDIGVAGFRLDAAKHMWPGDIKAVLDKLHNLNTKWFSQGSRPFIFQEVIDLGGEAIKGSEYFGNGRVTEFKYGAKLGTVIRKWNGEKMSYLKNWGEGWGFVPTDRALVFVDNHDNQRGHGAGGASILTFWDARMYKMAVGFMLAHPYGFTRVMSSYRRTRNFQNGKDVNDWIGPPNNNGVTKEVTINPDTTCGNDWVCEHRWRQIRNMVAFRNVVNGQPFANWWDNGSNQVAFSRGNRGFIVFNNDDWALSSTLQTGLPAGTYCDVISGDKVNGNCTGLKVNVGSDGKAHFSISNSAEDPFIAIHADSKL.

Residues 1-15 (MKFVLLLSLIGFCWA) form the signal peptide. Gln-16 carries the pyrrolidone carboxylic acid modification. Cystine bridges form between Cys-43-Cys-101, Cys-85-Cys-130, and Cys-156-Cys-172. 3 residues coordinate Ca(2+): Asn-115, Arg-170, and Asp-179. Arg-207 contributes to the chloride binding site. The active-site Nucleophile is Asp-209. His-213 contacts Ca(2+). Glu-245 (proton donor) is an active-site residue. 2 residues coordinate chloride: Asn-310 and Arg-349. Intrachain disulfides connect Cys-390–Cys-396 and Cys-462–Cys-474.

This sequence belongs to the glycosyl hydrolase 13 family. In terms of assembly, monomer. The cofactor is Ca(2+). It depends on chloride as a cofactor.

The protein localises to the secreted. The protein resides in the extracellular space. The catalysed reaction is Endohydrolysis of (1-&gt;4)-alpha-D-glucosidic linkages in polysaccharides containing three or more (1-&gt;4)-alpha-linked D-glucose units.. The sequence is that of Pancreatic alpha-amylase (Amy2) from Rattus norvegicus (Rat).